The primary structure comprises 591 residues: Laccase (591 aa).

Residues 1 to 20 (MPSFFRALFSGLIASQLSWA) form the signal peptide. Plastocyanin-like domains are found at residues 66–189 (VRQY…IQID) and 198–356 (IDLG…HPTN). N-linked (GlcNAc...) asparagine glycosylation is present at Asn121. Cu cation is bound by residues His126, His128, His171, and His173. Intrachain disulfides connect Cys147-Cys571 and Cys332-Cys366. Residues Asn234, Asn242, Asn265, and Asn323 are each glycosylated (N-linked (GlcNAc...) asparagine). Residues Asn407 and Asn425 are each glycosylated (N-linked (GlcNAc...) asparagine). The Plastocyanin-like 3 domain occupies 416–551 (GHPITQYVIN…AGLGNTFLEQ (136 aa)). Cu cation is bound by residues His463, His466, His468, His533, Cys534, His535, and His539.

This sequence belongs to the multicopper oxidase family. It depends on Cu cation as a cofactor.

The protein resides in the secreted. It carries out the reaction 4 hydroquinone + O2 = 4 benzosemiquinone + 2 H2O. Lignin degradation and detoxification of lignin-derived products. The chain is Laccase (LAC-1) from Cryphonectria parasitica (Chestnut blight fungus).